The sequence spans 427 residues: Tol-Pal system protein TolB (427 aa).

An N-terminal signal peptide occupies residues 1–23; it reads MKLIARLMSMCAVLFFAINSAYA.

The protein belongs to the TolB family. As to quaternary structure, the Tol-Pal system is composed of five core proteins: the inner membrane proteins TolA, TolQ and TolR, the periplasmic protein TolB and the outer membrane protein Pal. They form a network linking the inner and outer membranes and the peptidoglycan layer.

The protein resides in the periplasm. In terms of biological role, part of the Tol-Pal system, which plays a role in outer membrane invagination during cell division and is important for maintaining outer membrane integrity. In Actinobacillus succinogenes (strain ATCC 55618 / DSM 22257 / CCUG 43843 / 130Z), this protein is Tol-Pal system protein TolB.